Reading from the N-terminus, the 1857-residue chain is Chitin synthase Y (1857 aa).

A disordered region spans residues M1–P22. The 788-residue stretch at M1–E788 folds into the Myosin motor domain. G102 to T109 is a binding site for ATP. The disordered stretch occupies residues S601–S653. The N-linked (GlcNAc...) asparagine glycan is linked to N634. The actin-binding stretch occupies residues L668 to D692. The next 2 membrane-spanning stretches (helical) occupy residues W898–G918 and L937–V957. A Cytochrome b5 heme-binding domain is found at Q961 to F1020. N-linked (GlcNAc...) asparagine glycans are attached at residues N1047 and N1072. Residues F1209–L1229 traverse the membrane as a helical segment. A glycan (N-linked (GlcNAc...) asparagine) is linked at N1572. Transmembrane regions (helical) follow at residues L1603 to L1623, I1630 to I1650, and M1657 to F1677. One can recognise a DEK-C domain in the interval L1799 to S1854.

This sequence in the N-terminal section; belongs to the TRAFAC class myosin-kinesin ATPase superfamily. Myosin family. The protein in the C-terminal section; belongs to the chitin synthase family. Class V subfamily.

Its subcellular location is the cell membrane. It localises to the cell septum. The protein localises to the cell tip. The enzyme catalyses [(1-&gt;4)-N-acetyl-beta-D-glucosaminyl](n) + UDP-N-acetyl-alpha-D-glucosamine = [(1-&gt;4)-N-acetyl-beta-D-glucosaminyl](n+1) + UDP + H(+). In terms of biological role, polymerizes chitin, a structural polymer of the cell wall and septum, by transferring the sugar moiety of UDP-GlcNAc to the non-reducing end of the growing chitin polymer. Specifically involved in hyphal elongation and new cell wall formation. The chain is Chitin synthase Y from Aspergillus oryzae (strain ATCC 42149 / RIB 40) (Yellow koji mold).